Here is a 449-residue protein sequence, read N- to C-terminus: Histidinol dehydrogenase (449 aa).

NAD(+) is bound by residues Tyr-135, Gln-199, and Asn-229. Substrate-binding residues include Thr-252, Gln-274, and His-277. Zn(2+) contacts are provided by Gln-274 and His-277. Catalysis depends on proton acceptor residues Glu-343 and His-344. Substrate-binding residues include His-344, Asp-377, Glu-431, and His-436. Zn(2+) is bound at residue Asp-377. His-436 is a binding site for Zn(2+).

Belongs to the histidinol dehydrogenase family. Zn(2+) is required as a cofactor.

The catalysed reaction is L-histidinol + 2 NAD(+) + H2O = L-histidine + 2 NADH + 3 H(+). Its pathway is amino-acid biosynthesis; L-histidine biosynthesis; L-histidine from 5-phospho-alpha-D-ribose 1-diphosphate: step 9/9. Its function is as follows. Catalyzes the sequential NAD-dependent oxidations of L-histidinol to L-histidinaldehyde and then to L-histidine. The protein is Histidinol dehydrogenase of Corynebacterium diphtheriae (strain ATCC 700971 / NCTC 13129 / Biotype gravis).